We begin with the raw amino-acid sequence, 352 residues long: fMet-Leu-Phe receptor (352 aa).

At 1–27 (MDSNASLPLNVSGGTQATPAGLVVLDV) the chain is on the extracellular side. N-linked (GlcNAc...) asparagine glycosylation is found at N4 and N10. A helical membrane pass occupies residues 28 to 50 (FSYLILVVTFVLGVLGNGLVIWV). Over 51–61 (TGFRMTHTVTT) the chain is Cytoplasmic. A helical membrane pass occupies residues 62–83 (ISYLNLALADFSFTSTLPFFIV). Residues 84–100 (TKALGGHWPFGWFLCKF) are Extracellular-facing. A disulfide bond links C98 and C178. The helical transmembrane segment at 101–121 (VFTIVDINLFGSVFLIALIAL) threads the bilayer. Residues 122 to 140 (DRCICVLHPVWAQNHRNVS) lie on the Cytoplasmic side of the membrane. The chain crosses the membrane as a helical span at residues 141-162 (LAKKVIVGPWICALLLTLPVII). The Extracellular portion of the chain corresponds to 163-207 (RVTTLSHPRAPGKMACTFDWSPWTEDPAEKLKVAISMFMVRGIIR). Residues 208 to 228 (FIIGFSTPMSIVAVCYGLIAT) form a helical membrane-spanning segment. Residues 229–244 (KIHRQGLIKSSRPLRV) are Cytoplasmic-facing. Residues 245–268 (LSFVVASFLLCWSPYQIAALIATV) form a helical membrane-spanning segment. Residues 269 to 287 (RIRELLLGMGKDLRIVLDV) are Extracellular-facing. Residues 288–307 (TSFVAFFNSCLNPMLYVFMG) traverse the membrane as a helical segment. At 308–352 (QDFRERLIHSLPASLERALSEDSAQTSDTGTNSTSAPAEAELQAI) the chain is on the cytoplasmic side.

It belongs to the G-protein coupled receptor 1 family. Post-translationally, phosphorylated; which is necessary for desensitization. As to expression, neutrophils.

It localises to the cell membrane. Its function is as follows. High affinity receptor for N-formyl-methionyl peptides (fMLP), which are powerful neutrophil chemotactic factors. Binding of fMLP to the receptor stimulates intracellular calcium mobilization and superoxide anion release. This response is mediated via a G-protein that activates a phosphatidylinositol-calcium second messenger system. Receptor for TAFA4, mediates its effects on chemoattracting macrophages, promoting phagocytosis and increasing ROS release. Receptor for cathepsin CTSG, leading to increased phagocyte chemotaxis. In Oryctolagus cuniculus (Rabbit), this protein is fMet-Leu-Phe receptor (FPR1).